An 862-amino-acid polypeptide reads, in one-letter code: DNA mismatch repair protein MutS (862 aa).

621–628 serves as a coordination point for ATP; the sequence is GPNMGGKS.

It belongs to the DNA mismatch repair MutS family.

Functionally, this protein is involved in the repair of mismatches in DNA. It is possible that it carries out the mismatch recognition step. This protein has a weak ATPase activity. This Vibrio cholerae serotype O1 (strain ATCC 39541 / Classical Ogawa 395 / O395) protein is DNA mismatch repair protein MutS.